A 370-amino-acid chain; its full sequence is Gibberellin 3-beta-dioxygenase 2-2 (370 aa).

The Fe2OG dioxygenase domain maps to 205 to 306 (MTATMHLNWY…RISLGYFLGP (102 aa)). Fe cation is bound by residues His-229, Asp-231, and His-287. The active site involves Arg-297.

This sequence belongs to the iron/ascorbate-dependent oxidoreductase family. GA3OX subfamily. L-ascorbate is required as a cofactor. Requires Fe cation as cofactor.

The catalysed reaction is gibberellin A20 + 2-oxoglutarate + O2 = gibberellin A1 + succinate + CO2. Its function is as follows. Converts the inactive gibberellin precursors GA9 and GA20 in the bioactives gibberellins GA4 and GA1. This is Gibberellin 3-beta-dioxygenase 2-2 (GA3ox2-2) from Triticum aestivum (Wheat).